We begin with the raw amino-acid sequence, 181 residues long: Lectin beta-1 and beta-2 chains (181 aa).

The Mn(2+) site is built by glutamate 119 and aspartate 121. Ca(2+) is bound by residues aspartate 121, phenylalanine 123, asparagine 125, and aspartate 129. Mn(2+)-binding residues include aspartate 129 and histidine 136.

The protein belongs to the leguminous lectin family. In terms of assembly, tetramer of two alpha and two beta chains.

The protein is Lectin beta-1 and beta-2 chains of Lathyrus ochrus (Cyprus-vetch).